Consider the following 356-residue polypeptide: Protein pelota homolog (356 aa).

This sequence belongs to the eukaryotic release factor 1 family. Pelota subfamily. In terms of assembly, monomer. Requires a divalent metal cation as cofactor.

The protein resides in the cytoplasm. Functionally, may function in recognizing stalled ribosomes, interact with stem-loop structures in stalled mRNA molecules, and effect endonucleolytic cleavage of the mRNA. May play a role in the release non-functional ribosomes and degradation of damaged mRNAs. Has endoribonuclease activity. This chain is Protein pelota homolog, found in Pyrococcus furiosus (strain ATCC 43587 / DSM 3638 / JCM 8422 / Vc1).